The primary structure comprises 105 residues: Thioredoxin (105 aa).

The region spanning 1–105 (MANNVTDSSF…SLLDWINKSI (105 aa)) is the Thioredoxin domain. A disulfide bridge connects residues Cys30 and Cys33.

The protein belongs to the thioredoxin family.

Its function is as follows. Component of the thioredoxin-thioredoxin reductase system. Participates in various redox reactions through the reversible oxidation of its active center dithiol to a disulfide and catalyzes dithiol-disulfide exchange reactions. In Rickettsia felis (strain ATCC VR-1525 / URRWXCal2) (Rickettsia azadi), this protein is Thioredoxin (trxA).